A 308-amino-acid polypeptide reads, in one-letter code: Cell division protein FtsX (308 aa).

The Extracellular segment spans residues 1-24 (MISRFFRHLFEALKSLKRNGWMTV). A helical membrane pass occupies residues 25-45 (AAVSSVMITLTLVAIFASVIF). Over 46–178 (NTAKLATDIE…NTERLFKLAS (133 aa)) the chain is Cytoplasmic. Residues 179–199 (FIRVWGLGIAALLIFIAAFLI) form a helical membrane-spanning segment. Residues 200–236 (SNTIRITIISRSREIQIMRLVGAKNSYIRGPFLLEGA) are Extracellular-facing. Residues 237–257 (FIGLLGAIAPSVLVFIVYQIV) traverse the membrane as a helical segment. Residues 258-276 (YQSVNKSLVGQNLSMISPD) lie on the Cytoplasmic side of the membrane. A helical membrane pass occupies residues 277–297 (LFSPLMIALLFVIGVFIGSLG). Topologically, residues 298–308 (SGISMRRFLKI) are extracellular.

Belongs to the ABC-4 integral membrane protein family. FtsX subfamily. In terms of assembly, interacts with FtsE. Interacts (via large extracellular loop) with PcsB (via N-terminal coiled coil domain). This interaction directs PcsB to equatorial and septal sites of dividing cells.

Its subcellular location is the cell membrane. Functionally, part of the ABC transporter FtsEX involved in asymmetric cellular division facilitating the initiation of sporulation. Required in maintaining normal growth and cellular morphology. The chain is Cell division protein FtsX from Streptococcus pneumoniae (strain ATCC BAA-255 / R6).